A 90-amino-acid chain; its full sequence is YcgL domain-containing protein YpsIP31758_2009 (90 aa).

Residues 1–85 enclose the YcgL domain; the sequence is MLCAIYRSPK…PPESLLKMHL (85 aa).

The sequence is that of YcgL domain-containing protein YpsIP31758_2009 from Yersinia pseudotuberculosis serotype O:1b (strain IP 31758).